Reading from the N-terminus, the 168-residue chain is Phosphopantetheine adenylyltransferase (168 aa).

Threonine 13 contacts substrate. Residues 13-14 and histidine 21 contribute to the ATP site; that span reads TF. Lysine 45, leucine 78, and arginine 92 together coordinate substrate. Residues 93 to 95, glutamate 103, and 128 to 134 each bind ATP; these read GLR and TQFISSS.

Belongs to the bacterial CoaD family. Homohexamer. It depends on Mg(2+) as a cofactor.

The protein resides in the cytoplasm. It carries out the reaction (R)-4'-phosphopantetheine + ATP + H(+) = 3'-dephospho-CoA + diphosphate. It functions in the pathway cofactor biosynthesis; coenzyme A biosynthesis; CoA from (R)-pantothenate: step 4/5. Its function is as follows. Reversibly transfers an adenylyl group from ATP to 4'-phosphopantetheine, yielding dephospho-CoA (dPCoA) and pyrophosphate. The polypeptide is Phosphopantetheine adenylyltransferase (Wolbachia pipientis subsp. Culex pipiens (strain wPip)).